The sequence spans 172 residues: Biogenesis of lysosome-related organelles complex 1 subunit 6 (172 aa).

The span at 1-10 (MNVPVPPPPD) shows a compositional bias: pro residues. 2 disordered regions span residues 1–35 (MNVP…RSPD) and 136–172 (ALKL…AKRT). Over residues 143 to 164 (RQKEELEREQQREREFEREKQL) the composition is skewed to basic and acidic residues.

This sequence belongs to the BLOC1S6 family. Homodimer. Octamer composed of one copy each BLOC1S1, BLOC1S2, BLOC1S3, BLOC1S4, BLOC1S5, BLOC1S6, DTNBP1/BLOC1S7 and SNAPIN/BLOC1S8. The BLOC-1 complex associates with the AP-3 protein complex and membrane protein cargos. Interacts with BLOC1S4, BLOC1S5, DTNBP1/BLOC1S7, F-actin, SNAP25 isoform 1 and isoform 2, SNAP47 and STX12. Component of the biogenesis of lysosome-related organelles complex 1 (BLOC-1) composed of BLOC1S1, BLOC1S2, BLOC1S3, BLOC1S4, BLOC1S5, BLOC1S6, DTNBP1/BLOC1S7 and SNAPIN/BLOC1S8.

The protein localises to the cytoplasm. It localises to the membrane. Component of the BLOC-1 complex, a complex that is required for normal biogenesis of lysosome-related organelles (LRO), such as platelet dense granules and melanosomes. In concert with the AP-3 complex, the BLOC-1 complex is required to target membrane protein cargos into vesicles assembled at cell bodies for delivery into neurites and nerve terminals. The BLOC-1 complex, in association with SNARE proteins, is also proposed to be involved in neurite extension. May play a role in intracellular vesicle trafficking, particularly in the vesicle-docking and fusion process. This chain is Biogenesis of lysosome-related organelles complex 1 subunit 6 (Bloc1s6), found in Rattus norvegicus (Rat).